Here is a 311-residue protein sequence, read N- to C-terminus: ATP synthase gamma chain (311 aa).

Cysteine 67 and cysteine 138 form a disulfide bridge.

It belongs to the ATPase gamma chain family. F-type ATPases have 2 components, CF(1) - the catalytic core - and CF(0) - the membrane proton channel. CF(1) has five subunits: alpha(3), beta(3), gamma(1), delta(1), epsilon(1). CF(0) has three main subunits: a, b and c.

Its subcellular location is the cellular thylakoid membrane. Its activity is regulated as follows. Thiol-modulation by raising the activation threshold of the enzyme upon oxidation of the cysteines, thereby preventing wasteful ATP-hydrolysis. Its function is as follows. Produces ATP from ADP in the presence of a proton gradient across the membrane. The gamma chain is believed to be important in regulating ATPase activity and the flow of protons through the CF(0) complex. This chain is ATP synthase gamma chain (atpG), found in Arthrospira platensis (Spirulina platensis).